A 373-amino-acid chain; its full sequence is S-adenosylmethionine:tRNA ribosyltransferase-isomerase (373 aa).

It belongs to the QueA family. Monomer.

Its subcellular location is the cytoplasm. It catalyses the reaction 7-aminomethyl-7-carbaguanosine(34) in tRNA + S-adenosyl-L-methionine = epoxyqueuosine(34) in tRNA + adenine + L-methionine + 2 H(+). The protein operates within tRNA modification; tRNA-queuosine biosynthesis. Transfers and isomerizes the ribose moiety from AdoMet to the 7-aminomethyl group of 7-deazaguanine (preQ1-tRNA) to give epoxyqueuosine (oQ-tRNA). This chain is S-adenosylmethionine:tRNA ribosyltransferase-isomerase, found in Caulobacter sp. (strain K31).